The chain runs to 116 residues: NADH-ubiquinone oxidoreductase chain 3 (116 aa).

The next 3 helical transmembrane spans lie at 3 to 23 (LITT…TVSF), 56 to 76 (FFLI…LLPL), and 85 to 105 (PALT…GLIY).

It belongs to the complex I subunit 3 family.

Its subcellular location is the mitochondrion membrane. It catalyses the reaction a ubiquinone + NADH + 5 H(+)(in) = a ubiquinol + NAD(+) + 4 H(+)(out). Core subunit of the mitochondrial membrane respiratory chain NADH dehydrogenase (Complex I) that is believed to belong to the minimal assembly required for catalysis. Complex I functions in the transfer of electrons from NADH to the respiratory chain. The immediate electron acceptor for the enzyme is believed to be ubiquinone. This Salmo trutta (Brown trout) protein is NADH-ubiquinone oxidoreductase chain 3 (MT-ND3).